We begin with the raw amino-acid sequence, 294 residues long: Nucleotide-binding protein Daud_0300 (294 aa).

Residue 11–18 participates in ATP binding; that stretch reads GLSGAGKT. 62–65 serves as a coordination point for GTP; it reads DIRG.

Belongs to the RapZ-like family.

In terms of biological role, displays ATPase and GTPase activities. The chain is Nucleotide-binding protein Daud_0300 from Desulforudis audaxviator (strain MP104C).